The following is a 101-amino-acid chain: Small ribosomal subunit protein uS14 (101 aa).

It belongs to the universal ribosomal protein uS14 family. As to quaternary structure, part of the 30S ribosomal subunit. Contacts proteins S3 and S10.

Functionally, binds 16S rRNA, required for the assembly of 30S particles and may also be responsible for determining the conformation of the 16S rRNA at the A site. This is Small ribosomal subunit protein uS14 from Neorickettsia sennetsu (strain ATCC VR-367 / Miyayama) (Ehrlichia sennetsu).